Consider the following 157-residue polypeptide: Small ribosomal subunit protein uS7 (157 aa).

It belongs to the universal ribosomal protein uS7 family. As to quaternary structure, part of the 30S ribosomal subunit. Contacts proteins S9 and S11.

Functionally, one of the primary rRNA binding proteins, it binds directly to 16S rRNA where it nucleates assembly of the head domain of the 30S subunit. Is located at the subunit interface close to the decoding center, probably blocks exit of the E-site tRNA. The sequence is that of Small ribosomal subunit protein uS7 from Desulfotalea psychrophila (strain LSv54 / DSM 12343).